The chain runs to 180 residues: MCDLVARTGRLQQRYEDGSRLVAGCIPFRYVNSDKDGNSESGKVIQVLMISSSSGPGLLFPKGGWENDETVREAAAREAVEEAGVRGILMDFLGNYEFKSKSHQDEFSPEGLCKAAMYALYVKEELATWPEHETRTRKWLTIEEAVESCRHPWMKDALVEGFCKWHKEKMVKGEEITGEH.

Residues 18-162 (GSRLVAGCIP…WMKDALVEGF (145 aa)) form the Nudix hydrolase domain. Position 60 (F60) interacts with substrate. Mn(2+) contacts are provided by G63, E78, E82, and E144. Residues 63 to 84 (GGWENDETVREAAAREAVEEAG) carry the Nudix box motif.

Belongs to the Nudix hydrolase family. Mg(2+) serves as cofactor. Mn(2+) is required as a cofactor. Expressed in roots, leaves, stems and inflorescences.

The protein localises to the mitochondrion. Functionally, probably mediates the hydrolysis of some nucleoside diphosphate derivatives. The polypeptide is Nudix hydrolase 16, mitochondrial (NUDT16) (Arabidopsis thaliana (Mouse-ear cress)).